A 59-amino-acid chain; its full sequence is Large ribosomal subunit protein bL32 (59 aa).

It belongs to the bacterial ribosomal protein bL32 family.

This chain is Large ribosomal subunit protein bL32, found in Malacoplasma penetrans (strain HF-2) (Mycoplasma penetrans).